Here is a 307-residue protein sequence, read N- to C-terminus: Aspartate carbamoyltransferase catalytic subunit (307 aa).

Residues arginine 54 and threonine 55 each contribute to the carbamoyl phosphate site. Position 83 (lysine 83) interacts with L-aspartate. Positions 104, 132, and 135 each coordinate carbamoyl phosphate. L-aspartate contacts are provided by arginine 165 and arginine 228. 2 residues coordinate carbamoyl phosphate: leucine 267 and proline 268.

Belongs to the aspartate/ornithine carbamoyltransferase superfamily. ATCase family. In terms of assembly, heterododecamer (2C3:3R2) of six catalytic PyrB chains organized as two trimers (C3), and six regulatory PyrI chains organized as three dimers (R2).

It catalyses the reaction carbamoyl phosphate + L-aspartate = N-carbamoyl-L-aspartate + phosphate + H(+). Its pathway is pyrimidine metabolism; UMP biosynthesis via de novo pathway; (S)-dihydroorotate from bicarbonate: step 2/3. Functionally, catalyzes the condensation of carbamoyl phosphate and aspartate to form carbamoyl aspartate and inorganic phosphate, the committed step in the de novo pyrimidine nucleotide biosynthesis pathway. The protein is Aspartate carbamoyltransferase catalytic subunit of Clostridium botulinum (strain Langeland / NCTC 10281 / Type F).